The sequence spans 193 residues: Putative manganese efflux pump MntP (193 aa).

6 consecutive transmembrane segments (helical) span residues 3–23 (IFAV…VAVV), 41–61 (AAFG…GVSV), 69–89 (DHWI…LSGL), 107–127 (AGRN…AVGL), 130–150 (AILG…CAVI), and 164–184 (LCAL…AIAC).

This sequence belongs to the MntP (TC 9.B.29) family.

Its subcellular location is the cell inner membrane. In terms of biological role, probably functions as a manganese efflux pump. This chain is Putative manganese efflux pump MntP, found in Desulfovibrio desulfuricans (strain ATCC 27774 / DSM 6949 / MB).